The following is a 679-amino-acid chain: Protein hook (679 aa).

Residues 5–123 (NGMYYSLLEW…RLLQLVLGCA (119 aa)) enclose the Calponin-homology (CH) domain. Positions 140-627 (EEELQANIMR…SKTKMSTMEE (488 aa)) form a coiled coil.

The protein belongs to the hook family. As to quaternary structure, homodimer. Interacts with microtubules via its N-terminus.

The protein localises to the cytoplasm. It is found in the cytoskeleton. Its subcellular location is the endosome. It localises to the synapse. Functionally, involved in endocytic trafficking by stabilizing organelles of the endocytic pathway. Probably acts as a cytoskeletal linker protein required to tether endosome vesicles to the cytoskeleton. Involved in modulation of endocytosis at stages required for down-regulation of membrane proteins that control synapse size. Not involved in synaptic vesicle recycling. Required in R7 cells for boss endocytosis into multivesicular bodies (MVBs). Has a role in regulating adult longevity. This Drosophila mojavensis (Fruit fly) protein is Protein hook.